A 917-amino-acid polypeptide reads, in one-letter code: Glutamate receptor (917 aa).

The first 19 residues, 1 to 19 (MDTCVFPLVVLWISMRITS), serve as a signal peptide directing secretion. Over 20-556 (TLDEVPIGGI…HFFSFMEPLS (537 aa)) the chain is Extracellular. 12 N-linked (GlcNAc...) asparagine glycosylation sites follow: Asn-62, Asn-95, Asn-121, Asn-125, Asn-229, Asn-251, Asn-261, Asn-272, Asn-418, Asn-419, Asn-424, and Asn-491. A helical transmembrane segment spans residues 557–577 (SEIWMCIVFAYIGVSVVLFLV). The Cytoplasmic segment spans residues 578-631 (SRFSPNEWHLSEAHHSYIANDFSISNSLWFSLGAFMQQGCDISPRSMSGRIVGS). A helical membrane pass occupies residues 632–652 (VWWFFTLIIISSYTANLAAFL). Topologically, residues 653 to 818 (TVERMLTPID…GAQSALTLAN (166 aa)) are extracellular. A glycan (N-linked (GlcNAc...) asparagine) is linked at Asn-775. Residues 819-839 (VAGIFYILIGGLVVAVLSAAF) traverse the membrane as a helical segment. Residues 840–917 (EFLYKSRMDS…FEDSNTHTEV (78 aa)) lie on the Cytoplasmic side of the membrane. Positions 871–896 (HIDSEQKTTGNGTRRRSHNSVTYTYT) are disordered.

This sequence belongs to the glutamate-gated ion channel (TC 1.A.10.1) family.

Its subcellular location is the cell membrane. The protein localises to the postsynaptic cell membrane. Its function is as follows. Receptor for glutamate. L-glutamate acts as an excitatory neurotransmitter at many synapses in the central nervous system. The postsynaptic actions of Glu are mediated by a variety of receptors. This is Glutamate receptor from Lymnaea stagnalis (Great pond snail).